We begin with the raw amino-acid sequence, 416 residues long: Lipase (416 aa).

The signal sequence occupies residues 1-28; sequence MKCCRIMFVLLGLWFVFGLSVPGGRTEA. Ser141 (nucleophile) is an active-site residue. Gly314 is a Ca(2+) binding site. Catalysis depends on Asp345, which acts as the Charge relay system. A Ca(2+)-binding site is contributed by Asp385. The active-site Charge relay system is the His386. 3 residues coordinate Ca(2+): Glu388, Asp393, and Pro394.

This sequence belongs to the AB hydrolase superfamily. As to quaternary structure, homodimer.

Its subcellular location is the secreted. It carries out the reaction a triacylglycerol + H2O = a diacylglycerol + a fatty acid + H(+). Activity is inhibited by zinc and iron ions, and activated in vitro in 25% v/v DMSO and acetone. Triacylglycerol hydrolase that shows hydrolysis preference towards some of the natural oils such as olive, sunflower and corn oils. The chain is Lipase from Bacillus sp.